Here is a 405-residue protein sequence, read N- to C-terminus: Bestrophin homolog 14 (405 aa).

A run of 4 helical transmembrane segments spans residues 28–48, 63–83, 223–243, and 256–276; these read LIGF…LLDE, IGAQ…LIVA, LVYT…CLIG, and EITI…LGWL.

The protein belongs to the anion channel-forming bestrophin (TC 1.A.46) family. Calcium-sensitive chloride channel subfamily.

The protein localises to the membrane. This is Bestrophin homolog 14 (best-14) from Caenorhabditis elegans.